The following is a 1148-amino-acid chain: Autophagy-related protein 11 (1148 aa).

The AIM (Atg8-family-interacting motif) motif lies at Phe-567–Ile-570. The segment covering Lys-699–Lys-710 has biased composition (basic and acidic residues). 3 disordered regions span residues Lys-699–Asn-727, Pro-754–Glu-777, and Asn-784–Arg-803. Composition is skewed to polar residues over residues Pro-754 to Glu-767 and Asn-784 to Lys-793. 2 coiled-coil regions span residues Glu-816–Asn-868 and Asp-956–Leu-996. Thr-851 is modified (phosphothreonine). The AIM (Atg8-family-interacting motif) signature appears at Tyr-1130–Val-1133.

This sequence belongs to the ATG11 family. In terms of assembly, homodimer. Interacts with ATG8E, ATG13A and ATG101. Binds to ATG8E on autophagic vesicles.

The protein localises to the cytoplasmic vesicle. It is found in the autophagosome. In terms of biological role, accessory protein involved in autophagy. Acts as a scaffold protein of the ATG1-ATG13 complex for faithful delivery of autophagic vesicles to the vacuole. Involved in the stress-induced phosphorylation of ATG1A for turnover of ATG1-ATG13 complex and proper ATG1-ATG13 complex assembly or activity. Required for selective mitophagy. Required for senescence-induced breakdown of mitochondria-resident proteins and mitochondrial vesicles. Seems not essential for ATG8-mediated autophagy. In Arabidopsis thaliana (Mouse-ear cress), this protein is Autophagy-related protein 11.